We begin with the raw amino-acid sequence, 515 residues long: Gamma aminobutyrate transaminase 1, mitochondrial (515 aa).

Residues 1–57 (MAKISRLFGSTVKAAITAQAGFHGKRIPAVSSLQEHIVKSTPARYNSTQACLENDIS) constitute a mitochondrion transit peptide. Residue 172-173 (GS) coordinates pyridoxal 5'-phosphate. A substrate-binding site is contributed by Tyr205. Asp312 is a binding site for pyridoxal 5'-phosphate. Lys341 is a substrate binding site. An N6-(pyridoxal phosphate)lysine modification is found at Lys341.

It belongs to the class-III pyridoxal-phosphate-dependent aminotransferase family. As to expression, expressed in leaves, roots, stems, flowers and fruits.

Its subcellular location is the mitochondrion. The enzyme catalyses 4-aminobutanoate + pyruvate = succinate semialdehyde + L-alanine. It catalyses the reaction 4-aminobutanoate + glyoxylate = succinate semialdehyde + glycine. Its function is as follows. Transaminase that degrades gamma-amino butyric acid (GABA) and uses pyruvate or glyoxylate as amino-group acceptor. Cannot use beta-alanine, ornithine, acetylornithine, serine, glycine, asparagine, glutamine, glutamate, valine, leucine, isoleucine, methionine, phenylalanine, histidine, lysine, arginine, aspartate, threonine, tyrosine, tryptophan, proline, or cysteine as amino donors. Acts predominantly in vegetative tissues. This Solanum lycopersicum (Tomato) protein is Gamma aminobutyrate transaminase 1, mitochondrial (GABA-TP1).